The primary structure comprises 163 residues: Cyclic pyranopterin monophosphate synthase (163 aa).

Residues 74–76 and 111–112 contribute to the substrate site; these read MCH and ME. Asp126 is a catalytic residue.

The protein belongs to the MoaC family. As to quaternary structure, homohexamer; trimer of dimers.

It catalyses the reaction (8S)-3',8-cyclo-7,8-dihydroguanosine 5'-triphosphate = cyclic pyranopterin phosphate + diphosphate. The protein operates within cofactor biosynthesis; molybdopterin biosynthesis. Functionally, catalyzes the conversion of (8S)-3',8-cyclo-7,8-dihydroguanosine 5'-triphosphate to cyclic pyranopterin monophosphate (cPMP). This chain is Cyclic pyranopterin monophosphate synthase, found in Desulfitobacterium hafniense (strain DSM 10664 / DCB-2).